Reading from the N-terminus, the 106-residue chain is SH3 domain-binding glutamic acid-rich-like protein 2 (106 aa).

An SH3-binding motif is present at residues 61–67 (QGNPLPP).

Belongs to the SH3BGR family.

The protein resides in the nucleus. The polypeptide is SH3 domain-binding glutamic acid-rich-like protein 2 (sh3bgrl2) (Xenopus tropicalis (Western clawed frog)).